The following is a 409-amino-acid chain: Ribose-phosphate pyrophosphokinase 3, chloroplastic (409 aa).

Composition is skewed to low complexity over residues 1 to 16 and 34 to 43; these read MATA…PAAA and PASAFARPSP. Residues 1–43 form a disordered region; that stretch reads MATAASASASASPAAAFGAKTRRPGPSPSPSPSPASAFARPSP. The transit peptide at 1 to 44 directs the protein to the chloroplast; sequence MATAASASASASPAAAFGAKTRRPGPSPSPSPSPASAFARPSPR. D229 and H231 together coordinate Mg(2+). The binding of phosphoribosylpyrophosphate stretch occupies residues 312–327; the sequence is GRHVVIVDDLVQSGGT.

It belongs to the ribose-phosphate pyrophosphokinase family. Mg(2+) serves as cofactor.

It is found in the plastid. The protein resides in the chloroplast. It catalyses the reaction D-ribose 5-phosphate + ATP = 5-phospho-alpha-D-ribose 1-diphosphate + AMP + H(+). This is Ribose-phosphate pyrophosphokinase 3, chloroplastic from Oryza sativa subsp. japonica (Rice).